An 82-amino-acid chain; its full sequence is DNA-directed RNA polymerase subunit Rpo5 (82 aa).

Belongs to the archaeal Rpo5/eukaryotic RPB5 RNA polymerase subunit family. In terms of assembly, part of the RNA polymerase complex.

It localises to the cytoplasm. It carries out the reaction RNA(n) + a ribonucleoside 5'-triphosphate = RNA(n+1) + diphosphate. DNA-dependent RNA polymerase (RNAP) catalyzes the transcription of DNA into RNA using the four ribonucleoside triphosphates as substrates. The polypeptide is DNA-directed RNA polymerase subunit Rpo5 (Thermococcus celer).